A 564-amino-acid polypeptide reads, in one-letter code: MFS-type transporter astH (564 aa).

N-linked (GlcNAc...) asparagine glycosylation is present at asparagine 23. A disordered region spans residues 26-59; sequence KDTLVNCSPDPENPEKGQASSPRTQISVDDNEES. Polar residues predominate over residues 43-53; sequence QASSPRTQISV. 4 consecutive transmembrane segments (helical) span residues 69–89, 106–126, 143–163, and 197–217; these read LAMI…DTTI, DVGW…LSFG, GMFE…GLII, and GILG…GGAF. A glycan (N-linked (GlcNAc...) asparagine) is linked at asparagine 220. 6 helical membrane-spanning segments follow: residues 225–245, 266–286, 297–317, 339–359, 375–395, and 396–416; these read WCFY…ILFF, LLGS…LQWG, IIAL…VQWW, LFSF…PMWF, LPMV…VGAL, and GYYT…AGLL. An N-linked (GlcNAc...) asparagine glycan is attached at asparagine 425. The next 2 helical transmembrane spans lie at 461–481 and 537–557; these read TGTV…MSVG and FYVA…MQWI.

It belongs to the major facilitator superfamily. TCR/Tet family.

Its subcellular location is the membrane. In terms of biological role, MFS-type transporter; part of the gene cluster that mediates the biosynthesis of astellolides, drimane-type sesquiterpene esters that show antimicrobial, anti-inflammatory, and anti-tumor activities. Seems not to be involved in astellolides translocation. The polypeptide is MFS-type transporter astH (Aspergillus oryzae (strain ATCC 42149 / RIB 40) (Yellow koji mold)).